The chain runs to 345 residues: Uroporphyrinogen decarboxylase (345 aa).

Residues 27–31 (RQAGR), Phe-46, Asp-76, Tyr-152, Ser-207, and His-320 contribute to the substrate site.

Belongs to the uroporphyrinogen decarboxylase family. Homodimer.

The protein resides in the cytoplasm. It carries out the reaction uroporphyrinogen III + 4 H(+) = coproporphyrinogen III + 4 CO2. It participates in porphyrin-containing compound metabolism; protoporphyrin-IX biosynthesis; coproporphyrinogen-III from 5-aminolevulinate: step 4/4. Its function is as follows. Catalyzes the decarboxylation of four acetate groups of uroporphyrinogen-III to yield coproporphyrinogen-III. This Geobacillus kaustophilus (strain HTA426) protein is Uroporphyrinogen decarboxylase.